A 143-amino-acid chain; its full sequence is Hemoglobin subunit alpha-1 (143 aa).

The residue at position 2 (Ser2) is an N-acetylserine. The Globin domain occupies 2–143 (SLTEKDKAAV…VSLALAERYR (142 aa)). His60 is a binding site for O2. His89 is a binding site for heme b.

The protein belongs to the globin family. As to quaternary structure, hb 1 is a heterotetramer of two alpha-1 and two beta chains. As to expression, red blood cells.

Involved in oxygen transport from gills to the various peripheral tissues. The sequence is that of Hemoglobin subunit alpha-1 (hba1) from Cottoperca gobio (Frogmouth).